Consider the following 95-residue polypeptide: Bombyxin C-2 (95 aa).

An N-terminal signal peptide occupies residues 1–19 (MKLVILLVVVSAMLVLGGA). Glutamine 20 carries the post-translational modification Pyrrolidone carboxylic acid. 3 disulfide bridges follow: cysteine 27-cysteine 76, cysteine 39-cysteine 89, and cysteine 75-cysteine 80. The propeptide at 47-67 (SGSQYAGYGWPWLPPFSSSRG) is c peptide like.

This sequence belongs to the insulin family. As to quaternary structure, heterodimer of a B chain and an A chain linked by two disulfide bonds.

Its subcellular location is the secreted. Its function is as follows. Brain peptide responsible for activation of prothoracic glands to produce ecdysone in insects. The chain is Bombyxin C-2 (BBXC2) from Bombyx mori (Silk moth).